A 173-amino-acid polypeptide reads, in one-letter code: Small ribosomal subunit protein uS9 (173 aa).

The span at Met-1–Thr-15 shows a compositional bias: polar residues. Disordered regions lie at residues Met-1–Tyr-26 and Glu-135–Arg-173. A compositionally biased stretch (basic residues) spans Lys-154–Arg-173.

This sequence belongs to the universal ribosomal protein uS9 family.

The sequence is that of Small ribosomal subunit protein uS9 from Cutibacterium acnes (strain DSM 16379 / KPA171202) (Propionibacterium acnes).